We begin with the raw amino-acid sequence, 93 residues long: Co-chaperonin GroES (93 aa).

The protein belongs to the GroES chaperonin family. As to quaternary structure, heptamer of 7 subunits arranged in a ring. Interacts with the chaperonin GroEL.

Its subcellular location is the cytoplasm. Its function is as follows. Together with the chaperonin GroEL, plays an essential role in assisting protein folding. The GroEL-GroES system forms a nano-cage that allows encapsulation of the non-native substrate proteins and provides a physical environment optimized to promote and accelerate protein folding. GroES binds to the apical surface of the GroEL ring, thereby capping the opening of the GroEL channel. The sequence is that of Co-chaperonin GroES from Streptococcus intermedius.